Reading from the N-terminus, the 80-residue chain is Protein transport protein SSS1 (80 aa).

The Cytoplasmic portion of the chain corresponds to 1-46; the sequence is MARASEKGEEKKQSNNQVEKLVEAPVEFVREGTQFLAKCKKPDLKE. Residues 47-75 form a helical membrane-spanning segment; it reads YTKIVKAVGIGFIAVGIIGYAIKLIHIPI. Residues 76–80 are Extracellular-facing; it reads RYVIV.

Belongs to the SecE/SEC61-gamma family. In terms of assembly, component of the heterotrimeric Sec61 complex, which is composed of SSH1, SBH1 and SSS1. Presumably three to four Sec61 heterotrimers assemble into an oligomeric ring with a central aqueous pore. In cotranslational ER import, the pore diameter varies from 9-15 A in a ribosome-free resting state to 40-60 A in a functional state when associated with the ribosome. The Sec61 complex is part of a channel-forming translocon complex whose composition seem to change dependent upon different functional states. During post-translational ER import the Sec61 complex associates with the Sec62/63 complex to form the Sec complex. SSH1 is a component of the heterotrimeric Ssh1 complex, which is composed of SSH1, SBH2 and SSS1. SSS1 interacts with OST1, OST4, SWP1 and WBP1, components of the OT complex.

It localises to the endoplasmic reticulum membrane. Part of the Sec61 complex, which is the major component of channel-forming translocon complex that mediates protein translocation across the endoplasmic reticulum (ER). The functional states of the translocon complex include co- and post-translational ER import, cotranslational membrane protein integration and retrograde transport of misfolded proteins out of the ER. In the cotranslational pathway, ribosomes synthesizing presecretory proteins are targeted to the translocon by the cytosolic signal recognition particle (SRP) and its ER-localized receptor. The association of the Sec61 complex with the ribosome is mediated by the 28S rRNA of the large ribosomal subunit. SRP-independent post-translational translocation requires the association of additional factors, such as the Sec62/63 complex and KAR2. Also part of the Ssh1 complex, which probably is the major component of a channel-forming translocon complex that may function exclusively in the cotranslational pathway of protein ER import. The protein is Protein transport protein SSS1 (SSS1) of Saccharomyces cerevisiae (strain ATCC 204508 / S288c) (Baker's yeast).